The primary structure comprises 379 residues: Putative zinc metalloprotease sll0528 (379 aa).

2 consecutive transmembrane segments (helical) span residues Leu20–Leu40 and Gly54–Ala74. His75 lines the Zn(2+) pocket. The active site involves Glu76. Residue His79 coordinates Zn(2+). Transmembrane regions (helical) follow at residues Phe115–Val135, Ile148–Leu168, and Gly212–Leu232. 2 consecutive CBS domains span residues Val257 to Gln315 and Met322 to Ala379.

The protein belongs to the peptidase M50B family. Zn(2+) serves as cofactor.

The protein resides in the cell membrane. The sequence is that of Putative zinc metalloprotease sll0528 from Synechocystis sp. (strain ATCC 27184 / PCC 6803 / Kazusa).